A 1331-amino-acid chain; its full sequence is ABC multidrug transporter MDR2 (1331 aa).

Basic and acidic residues-rich tracts occupy residues 1 to 20 and 31 to 41; these read MVEV…KQEN and SDKEKVAKKGN. Residues 1 to 51 are disordered; sequence MVEVSEKPNTQDDGVSKQENRNPASSSSSTSDKEKVAKKGNSDATKSSTPE. Transmembrane regions (helical) follow at residues 93 to 113, 147 to 167, 219 to 239, and 242 to 262; these read MIFL…LPLF, YFVY…VGFI, KVGL…IGYV, and WKLA…MGGI. Residues 97 to 387 form the ABC transmembrane type-1 1 domain; sequence AIVSLASIAA…VAPNTQAFAS (291 aa). Asparagine 293 is a glycosylation site (N-linked (GlcNAc...) asparagine). 2 helical membrane passes run 325–345 and 358–378; these read LGIM…LGFW and LSAI…IGNV. The ABC transporter 1 domain maps to 422–667; that stretch reads IEFRGIKHIY…KGTYLQLVEA (246 aa). 457 to 464 contacts ATP; that stretch reads GPSGSGKS. 2 N-linked (GlcNAc...) asparagine glycosylation sites follow: asparagine 529 and asparagine 737. Transmembrane regions (helical) follow at residues 762-782 and 810-830; these read LCGF…SVFF and FLML…IFAI. Residues 764–1051 enclose the ABC transmembrane type-1 2 domain; sequence GFFFAVLSGA…VFSFSPDMGK (288 aa). N-linked (GlcNAc...) asparagine glycosylation is present at asparagine 860. The next 4 helical transmembrane spans lie at 884-904, 910-930, 995-1015, and 1025-1045; these read LGTI…ALAF, LVCI…FWIL, ASQS…GGLL, and FFLC…VFSF. The 239-residue stretch at 1086–1324 folds into the ABC transporter 2 domain; it reads IEFRDVHFRY…KGRYYELVHM (239 aa). Asparagine 1108 carries an N-linked (GlcNAc...) asparagine glycan. 1121 to 1128 contributes to the ATP binding site; it reads GPSGCGKS.

It belongs to the ABC transporter superfamily. ABCB family. Multidrug resistance exporter (TC 3.A.1.201) subfamily.

It localises to the cell membrane. The catalysed reaction is itraconazole(in) + ATP + H2O = itraconazole(out) + ADP + phosphate + H(+). Pleiotropic ABC efflux transporter that may be involved in the modulation susceptibility to a wide range of unrelated cytotoxic compounds. The chain is ABC multidrug transporter MDR2 from Trichophyton equinum (strain ATCC MYA-4606 / CBS 127.97) (Horse ringworm fungus).